The chain runs to 372 residues: NAD(P)H-quinone oxidoreductase subunit 1 (372 aa).

The next 8 membrane-spanning stretches (helical) occupy residues 29–49, 97–117, 128–148, 176–196, 204–224, 254–274, 308–328, and 351–371; these read WLPFPMLLMIVVATVGVLVTV, LLFTLGPVIVAVPVFLSYLVV, LGVAIFLWIALSSIQPIGLLM, LALAVLAVAMMSNSLSTIDIV, ILGWNIWRQPLGFIIFWIAVL, FALYYLASYVNLVLSSLLVAV, TLGIIMTLLKTYLLVFIAVLL, and VALVNLLLTAALKLTFPFAFG.

It belongs to the complex I subunit 1 family. NDH-1 is composed of at least 11 different subunits.

It localises to the cellular thylakoid membrane. It catalyses the reaction a plastoquinone + NADH + (n+1) H(+)(in) = a plastoquinol + NAD(+) + n H(+)(out). The catalysed reaction is a plastoquinone + NADPH + (n+1) H(+)(in) = a plastoquinol + NADP(+) + n H(+)(out). NDH-1 shuttles electrons from an unknown electron donor, via FMN and iron-sulfur (Fe-S) centers, to quinones in the respiratory and/or the photosynthetic chain. The immediate electron acceptor for the enzyme in this species is believed to be plastoquinone. Couples the redox reaction to proton translocation, and thus conserves the redox energy in a proton gradient. In Trichodesmium erythraeum (strain IMS101), this protein is NAD(P)H-quinone oxidoreductase subunit 1.